The chain runs to 334 residues: Dihydroorotate dehydrogenase (quinone) (334 aa).

FMN contacts are provided by residues 61 to 65 (AGLDK) and Thr85. Residue Lys65 participates in substrate binding. Position 110-114 (110-114 (NRMGF)) interacts with substrate. FMN-binding residues include Asn138 and Asn171. A substrate-binding site is contributed by Asn171. Ser174 functions as the Nucleophile in the catalytic mechanism. Asn176 lines the substrate pocket. Residues Lys216 and Thr244 each contribute to the FMN site. Residue 245 to 246 (NT) coordinates substrate. FMN is bound by residues Gly266, Gly295, and 316–317 (YT).

The protein belongs to the dihydroorotate dehydrogenase family. Type 2 subfamily. As to quaternary structure, monomer. The cofactor is FMN.

It localises to the cell membrane. The catalysed reaction is (S)-dihydroorotate + a quinone = orotate + a quinol. Its pathway is pyrimidine metabolism; UMP biosynthesis via de novo pathway; orotate from (S)-dihydroorotate (quinone route): step 1/1. In terms of biological role, catalyzes the conversion of dihydroorotate to orotate with quinone as electron acceptor. The polypeptide is Dihydroorotate dehydrogenase (quinone) (Idiomarina loihiensis (strain ATCC BAA-735 / DSM 15497 / L2-TR)).